Consider the following 232-residue polypeptide: T-cell surface glycoprotein CD1b-3 (232 aa).

Residues 1 to 201 (GLQEFQFEYP…LYWGHPMYIG (201 aa)) lie on the Extracellular side of the membrane. 3 disulfides stabilise this stretch: C19–C83, C48–C62, and C123–C178. N45 is a glycosylation site (N-linked (GlcNAc...) asparagine). One can recognise an Ig-like domain in the interval 84-194 (PRYLLGVLDA…LGDQDIILYW (111 aa)). Residues 202-222 (LIFVAIIVPSLILLICLALWF) traverse the membrane as a helical segment. The Cytoplasmic segment spans residues 223 to 232 (WRRWSYQTVL).

In terms of assembly, heterodimer with B2M (beta-2-microglobulin). Interacts with saposin C.

It is found in the cell membrane. Its subcellular location is the endosome membrane. It localises to the lysosome membrane. Its function is as follows. Antigen-presenting protein that binds self and non-self lipid and glycolipid antigens and presents them to T-cell receptors on natural killer T-cells. The polypeptide is T-cell surface glycoprotein CD1b-3 (Ovis aries (Sheep)).